The following is a 184-amino-acid chain: dITP/XTP pyrophosphatase (184 aa).

8–13 is a binding site for substrate; sequence TGNKGK. Mg(2+) is bound by residues Glu-37 and Asp-66. Catalysis depends on Asp-66, which acts as the Proton acceptor. Substrate-binding positions include Ser-67, 142 to 145, Lys-163, and 168 to 169; these read FGYD and HR.

The protein belongs to the HAM1 NTPase family. As to quaternary structure, homodimer. Mg(2+) serves as cofactor.

It carries out the reaction XTP + H2O = XMP + diphosphate + H(+). The enzyme catalyses dITP + H2O = dIMP + diphosphate + H(+). The catalysed reaction is ITP + H2O = IMP + diphosphate + H(+). Pyrophosphatase that catalyzes the hydrolysis of nucleoside triphosphates to their monophosphate derivatives, with a high preference for the non-canonical purine nucleotides XTP (xanthosine triphosphate), dITP (deoxyinosine triphosphate) and ITP. Seems to function as a house-cleaning enzyme that removes non-canonical purine nucleotides from the nucleotide pool, thus preventing their incorporation into DNA/RNA and avoiding chromosomal lesions. The chain is dITP/XTP pyrophosphatase from Methanosarcina mazei (strain ATCC BAA-159 / DSM 3647 / Goe1 / Go1 / JCM 11833 / OCM 88) (Methanosarcina frisia).